Here is a 328-residue protein sequence, read N- to C-terminus: Phosphate acyltransferase (328 aa).

It belongs to the PlsX family. As to quaternary structure, homodimer. Probably interacts with PlsY.

It is found in the cytoplasm. The catalysed reaction is a fatty acyl-[ACP] + phosphate = an acyl phosphate + holo-[ACP]. It participates in lipid metabolism; phospholipid metabolism. Its function is as follows. Catalyzes the reversible formation of acyl-phosphate (acyl-PO(4)) from acyl-[acyl-carrier-protein] (acyl-ACP). This enzyme utilizes acyl-ACP as fatty acyl donor, but not acyl-CoA. This Staphylococcus aureus (strain MSSA476) protein is Phosphate acyltransferase.